The primary structure comprises 442 residues: 4-alpha-glucanotransferase (442 aa).

Ca(2+)-binding residues include Asp13, Asn15, Asp17, Val19, and Asp21. The active-site Nucleophile is Asp186. Residue Glu216 is the Proton donor of the active site.

The protein belongs to the glycosyl hydrolase 13 family. As to quaternary structure, monomer. It depends on Ca(2+) as a cofactor.

The protein resides in the cytoplasm. The catalysed reaction is Transfers a segment of a (1-&gt;4)-alpha-D-glucan to a new position in an acceptor, which may be glucose or a (1-&gt;4)-alpha-D-glucan.. Hydrolyzes the 1,4-alpha-glycoside bonds in oligomeric and polymeric 1,4-alpha-glucans and transfers oligosaccharides (maltotriose being the shortest one) to acceptor maltodextrins. This Thermotoga neapolitana protein is 4-alpha-glucanotransferase (mgtA).